A 313-amino-acid polypeptide reads, in one-letter code: MAALRDTYNDPVHIAVIGGTGLRELPHFTQVASLNITTPWGPPSSPITILHHTCSTSGKVVPVAFLSRHGLHHEYAPHEVPARANIAALRSIGVRSIVAFSAVGSLQEAIKPRDFVVPDQVIDRTKGVRPWTFFEGGAVAHVGFADPFDEQMAKVVRACGHSLEGDGVVLHDRGTLICMEGPQFSTRAESNLYRSWGGSIINMSCIPEAKLAREAEIAYQMICMSTDYDCWHSEAADVTVDMVMANMKMNSVNARNFIGAVLDELTKDEHAALVQAKHLEGTCKFGLSTSPGYLSAEALTKLSWLFPGYFSNN.

Phosphate is bound by residues threonine 20, 68 to 69 (RH), and 101 to 102 (SA). Residue methionine 203 coordinates substrate. Phosphate is bound at residue serine 204. Residue 227–229 (DYD) participates in substrate binding.

This sequence belongs to the PNP/MTAP phosphorylase family. MTAP subfamily. Homotrimer.

The protein resides in the cytoplasm. Its subcellular location is the nucleus. The catalysed reaction is S-methyl-5'-thioadenosine + phosphate = 5-(methylsulfanyl)-alpha-D-ribose 1-phosphate + adenine. Its pathway is amino-acid biosynthesis; L-methionine biosynthesis via salvage pathway; S-methyl-5-thio-alpha-D-ribose 1-phosphate from S-methyl-5'-thioadenosine (phosphorylase route): step 1/1. Its function is as follows. Catalyzes the reversible phosphorylation of S-methyl-5'-thioadenosine (MTA) to adenine and 5-methylthioribose-1-phosphate. Involved in the breakdown of MTA, a major by-product of polyamine biosynthesis. Responsible for the first step in the methionine salvage pathway after MTA has been generated from S-adenosylmethionine. Has broad substrate specificity with 6-aminopurine nucleosides as preferred substrates. The protein is S-methyl-5'-thioadenosine phosphorylase of Ajellomyces capsulatus (strain G186AR / H82 / ATCC MYA-2454 / RMSCC 2432) (Darling's disease fungus).